Consider the following 42-residue polypeptide: Photosystem II reaction center protein J (42 aa).

Residues 10-30 (IPLWLVGTVVGLLAIGLLALF) form a helical membrane-spanning segment.

Belongs to the PsbJ family. As to quaternary structure, PSII is composed of 1 copy each of membrane proteins PsbA, PsbB, PsbC, PsbD, PsbE, PsbF, PsbH, PsbI, PsbJ, PsbK, PsbL, PsbM, PsbT, PsbX, PsbY, PsbZ, Psb30/Ycf12, at least 3 peripheral proteins of the oxygen-evolving complex and a large number of cofactors. It forms dimeric complexes.

Its subcellular location is the plastid. It is found in the chloroplast thylakoid membrane. Functionally, one of the components of the core complex of photosystem II (PSII). PSII is a light-driven water:plastoquinone oxidoreductase that uses light energy to abstract electrons from H(2)O, generating O(2) and a proton gradient subsequently used for ATP formation. It consists of a core antenna complex that captures photons, and an electron transfer chain that converts photonic excitation into a charge separation. The polypeptide is Photosystem II reaction center protein J (Mesostigma viride (Green alga)).